A 424-amino-acid chain; its full sequence is Serine--tRNA ligase (424 aa).

233–235 (TAE) lines the L-serine pocket. Residue 264–266 (RRE) participates in ATP binding. Glu-287 is a binding site for L-serine. 351–354 (EISS) is a binding site for ATP. Ser-386 is a binding site for L-serine.

This sequence belongs to the class-II aminoacyl-tRNA synthetase family. Type-1 seryl-tRNA synthetase subfamily. In terms of assembly, homodimer. The tRNA molecule binds across the dimer.

It is found in the cytoplasm. The catalysed reaction is tRNA(Ser) + L-serine + ATP = L-seryl-tRNA(Ser) + AMP + diphosphate + H(+). It catalyses the reaction tRNA(Sec) + L-serine + ATP = L-seryl-tRNA(Sec) + AMP + diphosphate + H(+). Its pathway is aminoacyl-tRNA biosynthesis; selenocysteinyl-tRNA(Sec) biosynthesis; L-seryl-tRNA(Sec) from L-serine and tRNA(Sec): step 1/1. Functionally, catalyzes the attachment of serine to tRNA(Ser). Is also able to aminoacylate tRNA(Sec) with serine, to form the misacylated tRNA L-seryl-tRNA(Sec), which will be further converted into selenocysteinyl-tRNA(Sec). This Pseudothermotoga lettingae (strain ATCC BAA-301 / DSM 14385 / NBRC 107922 / TMO) (Thermotoga lettingae) protein is Serine--tRNA ligase.